Reading from the N-terminus, the 363-residue chain is Spermidine/putrescine import ATP-binding protein PotA (363 aa).

Residues 9–239 form the ABC transporter domain; sequence IDVRNAVKRY…PANRFVADFI (231 aa). 41-48 lines the ATP pocket; that stretch reads GPSGCGKT.

It belongs to the ABC transporter superfamily. Spermidine/putrescine importer (TC 3.A.1.11.1) family. The complex is composed of two ATP-binding proteins (PotA), two transmembrane proteins (PotB and PotC) and a solute-binding protein (PotD).

The protein localises to the cell inner membrane. It carries out the reaction ATP + H2O + polyamine-[polyamine-binding protein]Side 1 = ADP + phosphate + polyamineSide 2 + [polyamine-binding protein]Side 1.. Functionally, part of the ABC transporter complex PotABCD involved in spermidine/putrescine import. Responsible for energy coupling to the transport system. The polypeptide is Spermidine/putrescine import ATP-binding protein PotA (Roseobacter denitrificans (strain ATCC 33942 / OCh 114) (Erythrobacter sp. (strain OCh 114))).